The following is a 296-amino-acid chain: Nucleotide-binding protein Rmet_0297 (296 aa).

Residue 8–15 (GISGSGKS) coordinates ATP. 57 to 60 (DIRS) provides a ligand contact to GTP.

Belongs to the RapZ-like family.

Its function is as follows. Displays ATPase and GTPase activities. This is Nucleotide-binding protein Rmet_0297 from Cupriavidus metallidurans (strain ATCC 43123 / DSM 2839 / NBRC 102507 / CH34) (Ralstonia metallidurans).